The following is a 428-amino-acid chain: Serine--tRNA ligase (428 aa).

Position 231-233 (231-233 (TAE)) interacts with L-serine. Residue 262–264 (RAE) participates in ATP binding. E285 is a binding site for L-serine. Residue 349–352 (EISS) participates in ATP binding. S385 lines the L-serine pocket.

It belongs to the class-II aminoacyl-tRNA synthetase family. Type-1 seryl-tRNA synthetase subfamily. In terms of assembly, homodimer. The tRNA molecule binds across the dimer.

It is found in the cytoplasm. It catalyses the reaction tRNA(Ser) + L-serine + ATP = L-seryl-tRNA(Ser) + AMP + diphosphate + H(+). The catalysed reaction is tRNA(Sec) + L-serine + ATP = L-seryl-tRNA(Sec) + AMP + diphosphate + H(+). The protein operates within aminoacyl-tRNA biosynthesis; selenocysteinyl-tRNA(Sec) biosynthesis; L-seryl-tRNA(Sec) from L-serine and tRNA(Sec): step 1/1. Catalyzes the attachment of serine to tRNA(Ser). Is also able to aminoacylate tRNA(Sec) with serine, to form the misacylated tRNA L-seryl-tRNA(Sec), which will be further converted into selenocysteinyl-tRNA(Sec). This Methylorubrum extorquens (strain PA1) (Methylobacterium extorquens) protein is Serine--tRNA ligase.